Reading from the N-terminus, the 697-residue chain is Elongation factor G (697 aa).

Residues 10 to 285 (AKTRNIGIMA…GVIDYLPSPL (276 aa)) form the tr-type G domain. GTP contacts are provided by residues 19–26 (AHIDAGKT), 83–87 (DTPGH), and 137–140 (NKMD).

This sequence belongs to the TRAFAC class translation factor GTPase superfamily. Classic translation factor GTPase family. EF-G/EF-2 subfamily.

The protein localises to the cytoplasm. In terms of biological role, catalyzes the GTP-dependent ribosomal translocation step during translation elongation. During this step, the ribosome changes from the pre-translocational (PRE) to the post-translocational (POST) state as the newly formed A-site-bound peptidyl-tRNA and P-site-bound deacylated tRNA move to the P and E sites, respectively. Catalyzes the coordinated movement of the two tRNA molecules, the mRNA and conformational changes in the ribosome. The protein is Elongation factor G of Lactobacillus helveticus (strain DPC 4571).